The following is a 287-amino-acid chain: Cbb3-type cytochrome c oxidase subunit FixP (287 aa).

The Cytoplasmic portion of the chain corresponds to 1 to 33 (MSQKHIDELSGVETTGHEWDGIQELNNPMPRWW). The helical transmembrane segment at 34 to 54 (IWTFYVTILWAIGYAIAYPAI) threads the bilayer. Topologically, residues 55 to 287 (PMITSATNGY…IFVHALGGGT (233 aa)) are periplasmic. Cytochrome c domains lie at 108-196 (FAIA…WGLT) and 203-284 (GLAA…HALG). Residues Cys121, Cys124, His125, Met173, Cys216, Cys219, His220, and Met261 each coordinate heme c.

Belongs to the CcoP / FixP family. As to quaternary structure, component of the cbb3-type cytochrome c oxidase at least composed of FixN, FixO, FixQ and FixP. The cofactor is heme c.

Its subcellular location is the cell inner membrane. Its pathway is energy metabolism; oxidative phosphorylation. Its function is as follows. C-type cytochrome. Part of the cbb3-type cytochrome c oxidase complex. FixP subunit is required for transferring electrons from donor cytochrome c via its heme groups to FixO subunit. From there, electrons are shuttled to the catalytic binuclear center of FixN subunit where oxygen reduction takes place. The complex also functions as a proton pump. The chain is Cbb3-type cytochrome c oxidase subunit FixP from Rhizobium etli (strain ATCC 51251 / DSM 11541 / JCM 21823 / NBRC 15573 / CFN 42).